Consider the following 289-residue polypeptide: Diaminopimelate epimerase (289 aa).

The substrate site is built by N13, Q47, and N67. Catalysis depends on C76, which acts as the Proton donor. Substrate-binding positions include 77 to 78 (GN), N167, N200, and 218 to 219 (ER). The active-site Proton acceptor is C227. A substrate-binding site is contributed by 228-229 (GT).

The protein belongs to the diaminopimelate epimerase family. Homodimer.

It is found in the cytoplasm. It carries out the reaction (2S,6S)-2,6-diaminopimelate = meso-2,6-diaminopimelate. Its pathway is amino-acid biosynthesis; L-lysine biosynthesis via DAP pathway; DL-2,6-diaminopimelate from LL-2,6-diaminopimelate: step 1/1. In terms of biological role, catalyzes the stereoinversion of LL-2,6-diaminopimelate (L,L-DAP) to meso-diaminopimelate (meso-DAP), a precursor of L-lysine and an essential component of the bacterial peptidoglycan. This chain is Diaminopimelate epimerase, found in Burkholderia ambifaria (strain ATCC BAA-244 / DSM 16087 / CCUG 44356 / LMG 19182 / AMMD) (Burkholderia cepacia (strain AMMD)).